We begin with the raw amino-acid sequence, 209 residues long: Thymidine kinase (209 aa).

ATP contacts are provided by residues alanine 9–serine 16 and aspartate 88–glutamine 91. The active-site Proton acceptor is the glutamate 89. Positions 146, 148, 183, and 186 each coordinate Zn(2+).

This sequence belongs to the thymidine kinase family. As to quaternary structure, homotetramer.

It localises to the cytoplasm. It catalyses the reaction thymidine + ATP = dTMP + ADP + H(+). The sequence is that of Thymidine kinase from Legionella pneumophila subsp. pneumophila (strain Philadelphia 1 / ATCC 33152 / DSM 7513).